Here is a 561-residue protein sequence, read N- to C-terminus: Asparagine synthetase [glutamine-hydrolyzing] (561 aa).

The active-site For GATase activity is the Cys2. The Glutamine amidotransferase type-2 domain occupies 2–191 (CGIWALFGSD…PGHYEVLDLK (190 aa)). L-glutamine contacts are provided by residues 49–53 (RLAVV), 75–77 (NGE), and Asp97. The Asparagine synthetase domain maps to 213–536 (HALYDSVEKL…PGRADWLTHY (324 aa)). ATP contacts are provided by residues Leu256, Ile288, and 363 to 364 (SG). Lys385 is modified (N6-acetyllysine). Thr545 carries the post-translational modification Phosphothreonine. Residue Ser557 is modified to Phosphoserine.

The enzyme catalyses L-aspartate + L-glutamine + ATP + H2O = L-asparagine + L-glutamate + AMP + diphosphate + H(+). It functions in the pathway amino-acid biosynthesis; L-asparagine biosynthesis; L-asparagine from L-aspartate (L-Gln route): step 1/1. The protein is Asparagine synthetase [glutamine-hydrolyzing] (ASNS) of Cricetulus griseus (Chinese hamster).